A 295-amino-acid polypeptide reads, in one-letter code: Replication-associated protein A (295 aa).

The tract at residues 1 to 31 (MSSLPVSESEGEGSGTSVQVPSRGGQVTPGE) is disordered. In terms of domain architecture, CRESS-DNA virus Rep endonuclease spans 35–138 (SLRTKHVFLT…PESSWEFGKF (104 aa)). An RCR-1 motif is present at residues 42–45 (FLTY). Glu-76, His-84, and His-86 together coordinate a divalent metal cation. The short motif at 84-86 (HLH) is the RCR-2 element. Tyr-124 (for DNA cleavage activity) is an active-site residue. The RCR-3 signature appears at 124-127 (YCMK). An oligomerization region spans residues 192 to 204 (SANALFPDPPQTY).

It belongs to the geminiviridae Rep protein family. As to quaternary structure, homooligomer. Part of the C- and V-complexes which are RepA-Rep-DNA complexes involved in the c-sense and v-sense transcription.

It is found in the host nucleus. It localises to the host cytoplasm. Functionally, implicated in enhancement of V-sense gene expression. Acts a an inhibitor of C-sense gene transcription. The polypeptide is Replication-associated protein A (Avena sativa (Oat)).